The sequence spans 164 residues: MADS-box transcription factor 51 (164 aa).

One can recognise an MADS-box domain in the interval 2–62; it reads ARRGRVQLRR…GKLYEYSSSS (61 aa). The interval 133-164 is disordered; the sequence is TKSKKMLAKQNGEGSRSRANSSGSRGQEEGSA.

In terms of tissue distribution, widely expressed.

It localises to the nucleus. Probable transcription factor involved in the regulation of flowering time under short day (SD) conditions. Functions as a promoter of flowering under SD conditions, upstream of EHD1, HD3A and MADS14, but downstream of GIGANTEA (GI). May transmit a SD promotion signal from GI to EHD1. Functions independently of MADS50 to control flowering time. This chain is MADS-box transcription factor 51, found in Oryza sativa subsp. japonica (Rice).